The chain runs to 78 residues: DNA-directed RNA polymerase subunit Rpo5 (78 aa).

Belongs to the archaeal Rpo5/eukaryotic RPB5 RNA polymerase subunit family. In terms of assembly, part of the RNA polymerase complex.

The protein localises to the cytoplasm. The catalysed reaction is RNA(n) + a ribonucleoside 5'-triphosphate = RNA(n+1) + diphosphate. Its function is as follows. DNA-dependent RNA polymerase (RNAP) catalyzes the transcription of DNA into RNA using the four ribonucleoside triphosphates as substrates. In Methanococcus vannielii (strain ATCC 35089 / DSM 1224 / JCM 13029 / OCM 148 / SB), this protein is DNA-directed RNA polymerase subunit Rpo5.